A 275-amino-acid polypeptide reads, in one-letter code: Polyamine aminopropyltransferase (275 aa).

One can recognise a PABS domain in the interval 2–235 (HLWFTEKQND…AMWSFTIGSK (234 aa)). Glutamine 31 is an S-methyl-5'-thioadenosine binding site. Residues histidine 62 and aspartate 86 each coordinate spermidine. S-methyl-5'-thioadenosine-binding positions include glutamate 106 and 137–138 (DG). Aspartate 155 (proton acceptor) is an active-site residue. Residue 155–158 (DSTD) coordinates spermidine. Proline 162 is an S-methyl-5'-thioadenosine binding site.

This sequence belongs to the spermidine/spermine synthase family. In terms of assembly, homodimer or homotetramer.

The protein localises to the cytoplasm. The enzyme catalyses S-adenosyl 3-(methylsulfanyl)propylamine + putrescine = S-methyl-5'-thioadenosine + spermidine + H(+). The protein operates within amine and polyamine biosynthesis; spermidine biosynthesis; spermidine from putrescine: step 1/1. Functionally, catalyzes the irreversible transfer of a propylamine group from the amino donor S-adenosylmethioninamine (decarboxy-AdoMet) to putrescine (1,4-diaminobutane) to yield spermidine. The polypeptide is Polyamine aminopropyltransferase (Desulforudis audaxviator (strain MP104C)).